Reading from the N-terminus, the 793-residue chain is MASLSSTILSRSPAARRRITPASAKLHRPECFATSAWMGSSSKNLSLSYQLNHKKISVATVDAPQVHDHDGTTVHQGHDAVKNIEDPIEYIRTLLRTTGDGRISVSPYDTAWVAMIKDVEGRDGPQFPSSLEWIVQNQLEDGSWGDQKLFCVYDRLVNTIACVVALRSWNVHAHKVKRGVTYIKENVDKLMEGNEEHMTCGFEVVFPALLQKAKSLGIEDLPYDSPAVQEVYHVREQKLKRIPLEIMHKIPTSLLFSLEGLENLDWDKLLKLQSADGSFLTSPSSTAFAFMQTKDEKCYQFIKNTIDTFNGGAPHTYPVDVFGRLWAIDRLQRLGISRFFEPEIADCLSHIHKFWTDKGVFSGRESEFCDIDDTSMGMRLMRMHGYDVDPNVLRNFKQKDGKFSCYGGQMIESPSPIYNLYRASQLRFPGEEILEDAKRFAYDFLKEKLANNQILDKWVISKHLPDEIKLGLEMPWLATLPRVEAKYYIQYYAGSGDVWIGKTLYRMPEISNDTYHDLAKTDFKRCQAKHQFEWLYMQEWYESCGIEEFGISRKDLLLSYFLATASIFELERTNERIAWAKSQIIAKMITSFFNKETTSEEDKRALLNELGNINGLNDTNGAGREGGAGSIALATLTQFLEGFDRYTRHQLKNAWSVWLTQLQHGEADDAELLTNTLNICAGHIAFREEILAHNEYKALSNLTSKICRQLSFIQSEKEMGVEGEIAAKSSIKNKELEEDMQMLVKLVLEKYGGIDRNIKKAFLAVAKTYYYRAYHAADTIDTHMFKVLFEPVA.

The N-terminal 59 residues, 1–59 (MASLSSTILSRSPAARRRITPASAKLHRPECFATSAWMGSSSKNLSLSYQLNHKKISVA), are a transit peptide targeting the chloroplast. Residue lysine 238 participates in substrate binding. Mg(2+) is bound by residues aspartate 370 and aspartate 372. The short motif at 370 to 373 (DIDD) is the DXDD motif element. Residue lysine 457 coordinates substrate.

It belongs to the terpene synthase family. Mg(2+) is required as a cofactor.

It localises to the plastid. Its subcellular location is the chloroplast. The catalysed reaction is (2E,6E,10E)-geranylgeranyl diphosphate = (+)-copalyl diphosphate. It functions in the pathway secondary metabolite biosynthesis; terpenoid biosynthesis. In terms of biological role, involved in tanshinone biosynthesis in hairy roots. Catalyzes the conversion of geranylgeranyl diphosphate (GGPP) to copalyl diphosphate (CPP). This is Copalyl diphosphate synthase CPS1, chloroplastic from Salvia miltiorrhiza (Chinese sage).